Reading from the N-terminus, the 246-residue chain is Probable transcriptional regulatory protein NT01CX_1819 (246 aa).

It belongs to the TACO1 family.

It is found in the cytoplasm. This Clostridium novyi (strain NT) protein is Probable transcriptional regulatory protein NT01CX_1819.